A 277-amino-acid polypeptide reads, in one-letter code: Putative envelope-preserving system protein Rv2742c (277 aa).

The segment covering 31 to 54 (RDENRQRHAQVDVQRRRDQPERGQ) has biased composition (basic and acidic residues). 3 disordered regions span residues 31–70 (RDEN…PDGR), 113–133 (QGSP…RLGR), and 180–210 (RQGS…HTAD). Over residues 116–133 (PRRRERRRGQTAHQRLGR) the composition is skewed to basic residues.

In terms of assembly, interacts with Rv2743c.

Functionally, involved in preservation of envelope integrity and tolerance to surface stress. Reverses the inhibitory effect of PspA on ClgR activity. Facilitates intracellular growth of M.tuberculosis. In Mycobacterium tuberculosis (strain ATCC 25618 / H37Rv), this protein is Putative envelope-preserving system protein Rv2742c.